Here is a 237-residue protein sequence, read N- to C-terminus: Ribonuclease PH (237 aa).

Phosphate is bound by residues Arg-86 and 124–126 (GTR).

It belongs to the RNase PH family. Homohexameric ring arranged as a trimer of dimers.

It carries out the reaction tRNA(n+1) + phosphate = tRNA(n) + a ribonucleoside 5'-diphosphate. Phosphorolytic 3'-5' exoribonuclease that plays an important role in tRNA 3'-end maturation. Removes nucleotide residues following the 3'-CCA terminus of tRNAs; can also add nucleotides to the ends of RNA molecules by using nucleoside diphosphates as substrates, but this may not be physiologically important. Probably plays a role in initiation of 16S rRNA degradation (leading to ribosome degradation) during starvation. This Methylobacterium sp. (strain 4-46) protein is Ribonuclease PH.